A 353-amino-acid chain; its full sequence is Outer membrane protein P2 (353 aa).

An N-terminal signal peptide occupies residues 1-20 (MKKTLAALIVGAFAASAANA).

This sequence belongs to the Gram-negative porin family. As to quaternary structure, homotrimer.

The protein resides in the cell outer membrane. Forms pores that allow passive diffusion of small molecules across the outer membrane. This chain is Outer membrane protein P2 (ompP2), found in Haemophilus influenzae.